We begin with the raw amino-acid sequence, 394 residues long: Elongation factor Tu (394 aa).

Residues 10–204 (KPHVNVGTIG…HLDNYIPEPE (195 aa)) enclose the tr-type G domain. A G1 region spans residues 19 to 26 (GHVDHGKT). 19-26 (GHVDHGKT) contacts GTP. Mg(2+) is bound at residue T26. The G2 stretch occupies residues 60-64 (GITIN). The tract at residues 81-84 (DCPG) is G3. GTP-binding positions include 81–85 (DCPGH) and 136–139 (NKCD). Residues 136-139 (NKCD) form a G4 region. Residues 174–176 (SAL) form a G5 region.

It belongs to the TRAFAC class translation factor GTPase superfamily. Classic translation factor GTPase family. EF-Tu/EF-1A subfamily. Monomer.

It localises to the cytoplasm. The catalysed reaction is GTP + H2O = GDP + phosphate + H(+). In terms of biological role, GTP hydrolase that promotes the GTP-dependent binding of aminoacyl-tRNA to the A-site of ribosomes during protein biosynthesis. This chain is Elongation factor Tu, found in Histophilus somni (strain 129Pt) (Haemophilus somnus).